The primary structure comprises 286 residues: F-box/SPRY domain-containing protein 1 (286 aa).

Alanine 2 carries the post-translational modification N-acetylalanine. An F-box domain is found at 33–82 (AGAGGRLPSRVLELVFSYLELSELRSCALVCKHWYRCLHGDENSEVWRSL). One can recognise a B30.2/SPRY domain in the interval 92 to 284 (LRTDILCNLP…VTLVYLGKPL (193 aa)).

It belongs to the FBXO45/Fsn family. Forms a complex with MYCBP2 and SKP1. Interacts with HEY1; leading to FBXO45 nuclear translocation. Interacts (via SPRY domain) with CDH2.

It localises to the secreted. The protein localises to the postsynaptic cell membrane. It is found in the presynaptic cell membrane. Its subcellular location is the nucleus. It functions in the pathway protein modification; protein ubiquitination. In terms of biological role, component of E3 ubiquitin ligase complex consisting of FBXO45, MYCBP2 and SKP1. Functions in substrate recognition but also plays an important role in assembly of the complex. Required for normal neuromuscular synaptogenesis, axon pathfinding and neuronal migration. Regulates neuron migration during brain development through interaction with N-cadherin/CDH2 after secretion via a non-classical mechanism. Plays a role in the regulation of neurotransmission at mature neurons. May control synaptic activity by controlling UNC13A via ubiquitin dependent pathway. Specifically recognizes TP73, promoting its ubiquitination and degradation. Polyubiquitinates NMNAT2, an adenylyltransferase that acts as an axon maintenance factor, and regulates its stability and degradation by the proteasome. Also acts by ubiquitinating FBXW7 during prolonged mitotic arrest and promotes FBXW7 proteasomal degradation. Induces subsequently an increase in mitotic slippage and prevents mitotic cell death. In response to influenza infection, mediates interferon-lambda receptor IFNLR1 polyubiquitination and degradation through the ubiquitin-proteasome system by docking with its intracellular receptor domain. This Homo sapiens (Human) protein is F-box/SPRY domain-containing protein 1 (FBXO45).